A 1063-amino-acid polypeptide reads, in one-letter code: Lysine-specific demethylase phf2 (1063 aa).

Residues 5-56 (PVYCICRLPYDVTQFMIECDACKDWFHGSCVGVDEDEAPDIDIYHCPNCEKT) form a PHD-type zinc finger. Residues 197 to 353 (FSDARMANIV…MQMRAYEVEK (157 aa)) form the JmjC domain. Thr246 is a binding site for 2-oxoglutarate. Fe cation contacts are provided by His249 and Glu251. 2-oxoglutarate is bound by residues Tyr259 and Lys266. Fe cation is bound at residue Asn321. Disordered stretches follow at residues 448–546 (VSDS…LAAL), 704–761 (NIKE…SAGI), 773–864 (GIDY…DMFD), and 879–1045 (YVYP…MATA). Residues 460 to 477 (SEPSNSKPPAEEPPSALS) show a composition bias toward low complexity. Basic and acidic residues-rich tracts occupy residues 513–540 (PPKE…EKKP) and 723–745 (KSPD…DVKG). Over residues 746–755 (RNSKVSKKKG) the composition is skewed to basic residues. The segment covering 776–791 (YSNNSQPPASPSTQEA) has biased composition (polar residues). Low complexity predominate over residues 813–833 (SNSQAKNNSHSSAASKKPSGA). The span at 842–852 (RPAKRLPKKTQ) shows a compositional bias: basic residues. Over residues 920 to 929 (RQERPAREGA) the composition is skewed to basic and acidic residues. The segment covering 953–964 (IKKKKKSAKKKP) has biased composition (basic residues). Residues 965 to 975 (IVAEESHKLSH) show a composition bias toward basic and acidic residues. Low complexity-rich tracts occupy residues 976–988 (DSSS…DSES) and 1021–1031 (SSSSSSQNASS). A Phosphoserine; by PKA modification is found at Ser1021.

Belongs to the JHDM1 histone demethylase family. JHDM1D subfamily.

Its subcellular location is the nucleus. It is found in the nucleolus. The protein resides in the chromosome. The protein localises to the centromere. It localises to the kinetochore. Functionally, lysine demethylase that demethylates both histones and non-histone proteins. Mediates demethylation of dimethylated 'Lys-9' of histone H3 (H3K9me2). Recruited to trimethylated 'Lys-4' of histone H3 (H3K4me3) at rDNA promoters and promotes expression of rDNA. This chain is Lysine-specific demethylase phf2 (phf2), found in Danio rerio (Zebrafish).